A 219-amino-acid chain; its full sequence is N-(5'-phosphoribosyl)anthranilate isomerase (219 aa).

Belongs to the TrpF family.

The enzyme catalyses N-(5-phospho-beta-D-ribosyl)anthranilate = 1-(2-carboxyphenylamino)-1-deoxy-D-ribulose 5-phosphate. The protein operates within amino-acid biosynthesis; L-tryptophan biosynthesis; L-tryptophan from chorismate: step 3/5. The chain is N-(5'-phosphoribosyl)anthranilate isomerase from Dehalococcoides mccartyi (strain ATCC BAA-2266 / KCTC 15142 / 195) (Dehalococcoides ethenogenes (strain 195)).